The following is a 443-amino-acid chain: D-inositol 3-phosphate glycosyltransferase (443 aa).

Residue histidine 30 participates in 1D-myo-inositol 3-phosphate binding. UDP-N-acetyl-alpha-D-glucosamine contacts are provided by residues 36–37 and glycine 44; that span reads QP. Residues 41 to 46, lysine 99, tyrosine 132, threonine 156, and arginine 176 each bind 1D-myo-inositol 3-phosphate; that span reads DAGGMN. Arginine 250, lysine 255, and arginine 316 together coordinate UDP-N-acetyl-alpha-D-glucosamine. 3 residues coordinate Mg(2+): phenylalanine 325, arginine 326, and cysteine 328. UDP-N-acetyl-alpha-D-glucosamine-binding residues include glutamate 338 and glutamate 346. Threonine 352 is a Mg(2+) binding site.

This sequence belongs to the glycosyltransferase group 1 family. MshA subfamily. Homodimer.

The enzyme catalyses 1D-myo-inositol 3-phosphate + UDP-N-acetyl-alpha-D-glucosamine = 1D-myo-inositol 2-acetamido-2-deoxy-alpha-D-glucopyranoside 3-phosphate + UDP + H(+). Functionally, catalyzes the transfer of a N-acetyl-glucosamine moiety to 1D-myo-inositol 3-phosphate to produce 1D-myo-inositol 2-acetamido-2-deoxy-glucopyranoside 3-phosphate in the mycothiol biosynthesis pathway. This Stackebrandtia nassauensis (strain DSM 44728 / CIP 108903 / NRRL B-16338 / NBRC 102104 / LLR-40K-21) protein is D-inositol 3-phosphate glycosyltransferase.